Consider the following 879-residue polypeptide: Alanine--tRNA ligase (879 aa).

Positions 566, 570, 668, and 672 each coordinate Zn(2+).

Belongs to the class-II aminoacyl-tRNA synthetase family. It depends on Zn(2+) as a cofactor.

It localises to the cytoplasm. It carries out the reaction tRNA(Ala) + L-alanine + ATP = L-alanyl-tRNA(Ala) + AMP + diphosphate. Its function is as follows. Catalyzes the attachment of alanine to tRNA(Ala) in a two-step reaction: alanine is first activated by ATP to form Ala-AMP and then transferred to the acceptor end of tRNA(Ala). Also edits incorrectly charged Ser-tRNA(Ala) and Gly-tRNA(Ala) via its editing domain. This chain is Alanine--tRNA ligase, found in Oceanobacillus iheyensis (strain DSM 14371 / CIP 107618 / JCM 11309 / KCTC 3954 / HTE831).